Here is a 389-residue protein sequence, read N- to C-terminus: Arrestin-C (389 aa).

Belongs to the arrestin family. In terms of tissue distribution, retina and pineal gland.

May play a role in an as yet undefined retina-specific signal transduction. Could bind to photoactivated-phosphorylated red/green opsins. This chain is Arrestin-C (arr3), found in Aquarana catesbeiana (American bullfrog).